We begin with the raw amino-acid sequence, 130 residues long: Glycoprotein hormone beta-5 (130 aa).

The N-terminal stretch at 1–24 is a signal peptide; sequence MKLAFLFLGPMALLLLAGYGCVLG. 5 disulfide bridges follow: Cys36/Cys84, Cys50/Cys99, Cys60/Cys115, Cys64/Cys117, and Cys120/Cys127. N-linked (GlcNAc...) asparagine glycosylation is present at Asn87.

It belongs to the glycoprotein hormones subunit beta family. As to quaternary structure, heterodimer with GPHA2; this heterodimer interacts with thyroid-stimulating hormone receptor (TSHR), and hence stimulates cAMP production. Post-translationally, N-glycosylated. In terms of tissue distribution, highly expressed in brain and at low levels in pituitary. Also found in retina, testis and skin but not in pancreas, parotid, kidney, stomach, liver, colon, small intestine, thyroid, brain or adrenal gland. In pituitary, colocalizes with ACTH, suggesting that it is located in corticotrophs.

The protein localises to the secreted. Functionally, functions as a heterodimeric glycoprotein hormone with GPHA2 able to bind and activate the thyroid-stimulating hormone receptor (TSHR), leading to increased cAMP production. Plays a central role in controlling thyroid cell metabolism. The chain is Glycoprotein hormone beta-5 (GPHB5) from Homo sapiens (Human).